The following is a 356-amino-acid chain: Zinc finger CCCH domain-containing protein 49 (356 aa).

2 consecutive C3H1-type zinc fingers follow at residues 120-146 (YSGT…HGVF) and 155-177 (YRTQ…AHSP). Residues 209–235 (ISPVSGSPPMSPRADSESSPMTQSLSR) form a disordered region. Positions 225–235 (ESSPMTQSLSR) are enriched in polar residues.

This chain is Zinc finger CCCH domain-containing protein 49, found in Arabidopsis thaliana (Mouse-ear cress).